Reading from the N-terminus, the 369-residue chain is FAD-dependent monooxygenase FPY4 (369 aa).

Belongs to the aromatic-ring hydroxylase family. Requires FAD as cofactor.

The protein operates within secondary metabolite biosynthesis. Its function is as follows. FAD-dependent monooxygenase; part of the gene cluster that mediates the biosynthesis of the gamma-pyrones fusapyrone (FPY) and deoxyfusapyrone (dFPY). FPY is an undecaketide and thus likely synthesized by the polyketide synthase FPY1 from acetyl-CoA functioning as starter unit and the addition of 10 malonyl-CoA extender units by successive Claisen-condensations. Next to this, FPY shares some rare features: C-glycosylated 4-deoxyglucose at C-3, a gem-dimethyl group at C-13, and an alpha-beta to beta-gamma double bond shift at C-20. During FPY biosynthesis mono-C-methyl groups are transferred to the tetra-, penta-, hexa- and heptaketide, while two C-methyl groups are transferred to the nonaketide, suggesting that the CMet domain is programmed to selectively catalyze two successive C-alpha-methylation reactions of the nonaketide, while other alpha-carbons are non- or mono-methylated only. While the origin of the 4'-deoxyglucose moiety remains opaque, its transfer to C-3 is most likely mediated by the C-glycosyltransferase FPY2. Next to this, the hydroxyl group present at C-33 and discriminating between FPY and dFPY, is likely to be installed by the cytochrome P450 monooxygenase FPY7. No putative function can be predicted for the remaining genes FPY3-FPY6. In Fusarium mangiferae (Mango malformation disease fungus), this protein is FAD-dependent monooxygenase FPY4.